A 28-amino-acid polypeptide reads, in one-letter code: Conotoxin Cl6a (28 aa).

3 disulfide bridges follow: Cys-3–Cys-13, Cys-7–Cys-19, and Cys-12–Cys-24.

Expressed by the venom duct.

It is found in the secreted. The sequence is that of Conotoxin Cl6a from Californiconus californicus (California cone).